The chain runs to 45 residues: MQKYVCNVCGYEYDPAEHDNVPFDQLPDDWCCPVCGVSKDQFSPA.

Residue M1 is modified to N-formylmethionine. The Rubredoxin-like domain maps to 1 to 45 (MQKYVCNVCGYEYDPAEHDNVPFDQLPDDWCCPVCGVSKDQFSPA). 4 residues coordinate Fe cation: C6, C9, C32, and C35.

This sequence belongs to the rubredoxin family. Requires Fe(3+) as cofactor.

Its subcellular location is the cytoplasm. In terms of biological role, rubredoxin is a small nonheme, iron protein lacking acid-labile sulfide. Its single Fe, chelated to 4 Cys, functions as an electron acceptor and may also stabilize the conformation of the molecule. Its function is as follows. Electron acceptor for cytoplasmic lactate dehydrogenase. The chain is Rubredoxin-1 (rd1) from Desulfovibrio desulfuricans (strain ATCC 27774 / DSM 6949 / MB).